Reading from the N-terminus, the 650-residue chain is Acetyl-coenzyme A synthetase (650 aa).

Residues 191-194 (RGGR), Thr311, and Asn335 each bind CoA. Residues 387–389 (GEP), 411–416 (DTWWQT), Asp500, and Arg515 contribute to the ATP site. CoA is bound at residue Ser523. Position 526 (Arg526) interacts with ATP. 3 residues coordinate Mg(2+): Val537, His539, and Val542. Position 584 (Arg584) interacts with CoA. Lys609 carries the post-translational modification N6-acetyllysine.

The protein belongs to the ATP-dependent AMP-binding enzyme family. Requires Mg(2+) as cofactor. In terms of processing, acetylated. Deacetylation by the SIR2-homolog deacetylase activates the enzyme.

It catalyses the reaction acetate + ATP + CoA = acetyl-CoA + AMP + diphosphate. Catalyzes the conversion of acetate into acetyl-CoA (AcCoA), an essential intermediate at the junction of anabolic and catabolic pathways. AcsA undergoes a two-step reaction. In the first half reaction, AcsA combines acetate with ATP to form acetyl-adenylate (AcAMP) intermediate. In the second half reaction, it can then transfer the acetyl group from AcAMP to the sulfhydryl group of CoA, forming the product AcCoA. This Shewanella sp. (strain MR-4) protein is Acetyl-coenzyme A synthetase.